Consider the following 184-residue polypeptide: Threonylcarbamoyl-AMP synthase (184 aa).

The region spanning 1 to 184 (MNNLENIVEQ…IFTQHIFRQG (184 aa)) is the YrdC-like domain.

Belongs to the SUA5 family. TsaC subfamily.

The protein localises to the cytoplasm. The catalysed reaction is L-threonine + hydrogencarbonate + ATP = L-threonylcarbamoyladenylate + diphosphate + H2O. Its function is as follows. Required for the formation of a threonylcarbamoyl group on adenosine at position 37 (t(6)A37) in tRNAs that read codons beginning with adenine. Catalyzes the conversion of L-threonine, HCO(3)(-)/CO(2) and ATP to give threonylcarbamoyl-AMP (TC-AMP) as the acyladenylate intermediate, with the release of diphosphate. This Actinobacillus pleuropneumoniae serotype 7 (strain AP76) protein is Threonylcarbamoyl-AMP synthase.